Reading from the N-terminus, the 406-residue chain is [Pyruvate dehydrogenase (acetyl-transferring)] kinase isozyme 3, mitochondrial (406 aa).

A Histidine kinase domain is found at 131–362; the sequence is IEYKEKFGFD…DAVIYLKALS (232 aa). Position 247–254 (247–254) interacts with ATP; it reads ELFKNSMR. Lysine 278 bears the N6-succinyllysine mark. Residues aspartate 287, 306–307, and 323–328 contribute to the ATP site; these read ST and GFGYGL. A disordered region spans residues 383-406; it reads TPEADDWSNPSSEPRDASKYKAKQ. The segment covering 395–406 has biased composition (basic and acidic residues); sequence EPRDASKYKAKQ.

This sequence belongs to the PDK/BCKDK protein kinase family. As to quaternary structure, homodimer. Interacts with the pyruvate dehydrogenase complex subunit DLAT, and is part of the multimeric pyruvate dehydrogenase complex that contains multiple copies of pyruvate dehydrogenase (E1), dihydrolipoamide acetyltransferase (DLAT, E2) and lipoamide dehydrogenase (DLD, E3). In terms of tissue distribution, expressed in heart, skeletal muscle, spinal cord, as well as fetal and adult brain.

The protein localises to the mitochondrion matrix. The enzyme catalyses L-seryl-[pyruvate dehydrogenase E1 alpha subunit] + ATP = O-phospho-L-seryl-[pyruvate dehydrogenase E1 alpha subunit] + ADP + H(+). Activated by interaction with DLAT. Inhibited by AZD7545, dichloroacetate and radicicol. Its function is as follows. Inhibits pyruvate dehydrogenase activity by phosphorylation of the E1 subunit PDHA1, and thereby regulates glucose metabolism and aerobic respiration. Can also phosphorylate PDHA2. Decreases glucose utilization and increases fat metabolism in response to prolonged fasting, and as adaptation to a high-fat diet. Plays a role in glucose homeostasis and in maintaining normal blood glucose levels in function of nutrient levels and under starvation. Plays a role in the generation of reactive oxygen species. The protein is [Pyruvate dehydrogenase (acetyl-transferring)] kinase isozyme 3, mitochondrial (PDK3) of Homo sapiens (Human).